The chain runs to 402 residues: MTVRVGDPELVLDPYDYDFHEDPYPYYRRLRDEAPLYRNEERNFWAVSRHHDVLQGFRDSTALSNAYGVSLDPSSRTSEAYRVMSMLAMDDPAHLRMRTLVSKGFTPRRIRELEPQVLELARIHLDSALQTESFDFVAEFAGKLPMDVISELIGVPDTDRARIRALADAVLHREDGVADVPPPAMAASIELMRYYADLIAEFRRRPANNLTSALLAAELDGDRLSDQEIMAFLFLMVIAGNETTTKLLANAVYWAAHHPGQLARVFADHSRIPMWVEETLRYDTSSQILARTVAHDLTLYDTTIPEGEVLLLLPGSANRDDRVFDDPDDYRIGREIGCKLVSFGSGAHFCLGAHLARMEARVALGALLRRIRNYEVDDDNVVRVHSSNVRGFAHLPISVQAR.

Cysteine 350 is a binding site for heme.

It belongs to the cytochrome P450 family. The cofactor is heme.

This is Putative cytochrome P450 123 (cyp123) from Mycobacterium bovis (strain ATCC BAA-935 / AF2122/97).